We begin with the raw amino-acid sequence, 159 residues long: Ribosome maturation factor RimP (159 aa).

It belongs to the RimP family.

The protein localises to the cytoplasm. Functionally, required for maturation of 30S ribosomal subunits. This Trichlorobacter lovleyi (strain ATCC BAA-1151 / DSM 17278 / SZ) (Geobacter lovleyi) protein is Ribosome maturation factor RimP.